A 1337-amino-acid chain; its full sequence is Aldehyde oxidase 4 (1337 aa).

The region spanning 4–91 is the 2Fe-2S ferredoxin-type domain; that stretch reads DDLVFAVNGE…GCSITTSDGL (88 aa). Positions 43, 48, 51, 73, 113, 116, 155, and 157 each coordinate [2Fe-2S] cluster. The FAD-binding PCMH-type domain occupies 225–409; sequence LDQTRYHWST…LKVHIPRWIA (185 aa). FAD is bound by residues 259–266, 342–346, Asp-358, and Leu-399; these read LVVGNTGT and SIGGN. Residues Gln-771, Phe-802, and Arg-915 each coordinate Mo-molybdopterin. Residue Glu-1265 is the Proton acceptor of the active site.

This sequence belongs to the xanthine dehydrogenase family. As to quaternary structure, aldehyde oxidases (AO) are homodimers and heterodimers of AO subunits. It depends on [2Fe-2S] cluster as a cofactor. The cofactor is FAD. Requires Mo-molybdopterin as cofactor. Transcripts expressed at high levels in developing siliques and at low levels in dry seeds.

The protein resides in the cytoplasm. The catalysed reaction is indole-3-acetaldehyde + O2 + H2O = (indol-3-yl)acetate + H2O2 + H(+). It carries out the reaction an aldehyde + O2 + H2O = a carboxylate + H2O2 + H(+). The enzyme catalyses benzaldehyde + O2 + H2O = benzoate + H2O2 + H(+). It catalyses the reaction hexanal + O2 + H2O = hexanoate + H2O2 + H(+). The catalysed reaction is 1-naphthaldehyde + O2 + H2O = 1-naphthoate + H2O2 + H(+). It carries out the reaction vanillin + O2 + H2O = vanillate + H2O2 + H(+). The enzyme catalyses malonaldehyde + O2 + H2O = 3-oxopropanoate + H2O2 + H(+). It catalyses the reaction citral + O2 + H2O = 3,7-dimethylocta-2,6-dienoate + H2O2 + H(+). The catalysed reaction is acrolein + O2 + H2O = acrylate + H2O2 + H(+). It carries out the reaction (E)-4-hydroxynon-2-enal + O2 + H2O = (E)-4-hydroxynon-2-enoate + H2O2 + H(+). The enzyme catalyses (E)-cinnamaldehyde + O2 + H2O = (E)-cinnamate + H2O2 + H(+). It catalyses the reaction indole-3-carbaldehyde + O2 + H2O = indole-3-carboxylate + H2O2 + H(+). The catalysed reaction is propanal + O2 + H2O = propanoate + H2O2 + H(+). It carries out the reaction dodecanal + O2 + H2O = dodecanoate + H2O2 + H(+). The enzyme catalyses salicylaldehyde + O2 + H2O = salicylate + H2O2 + H(+). With respect to regulation, inhibited by Cu(2+). Aldehyde oxidase with a broad substrate specificity. Involved in the accumulation of benzoic acid (BA) in siliques. Delays and protects siliques from senescence by catalyzing aldehyde detoxification in siliques. Catalyzes the oxidation of an array of aromatic and aliphatic aldehydes, including vanillin and the reactive carbonyl species (RCS) acrolein, 4-hydroxyl-2-nonenal (HNE), and malondialdehyde (MDA). This is Aldehyde oxidase 4 from Arabidopsis thaliana (Mouse-ear cress).